A 336-amino-acid polypeptide reads, in one-letter code: Dihydroorotate dehydrogenase (quinone) (336 aa).

FMN-binding positions include 62–66 (AGLDK) and Thr-86. Position 66 (Lys-66) interacts with substrate. Position 111–115 (111–115 (NRMGF)) interacts with substrate. FMN contacts are provided by Asn-139 and Asn-172. Asn-172 is a substrate binding site. Ser-175 serves as the catalytic Nucleophile. Asn-177 is a substrate binding site. Residues Lys-217 and Thr-245 each contribute to the FMN site. 246 to 247 (NT) provides a ligand contact to substrate. FMN is bound by residues Gly-268, Gly-297, and 318 to 319 (YS).

It belongs to the dihydroorotate dehydrogenase family. Type 2 subfamily. Monomer. The cofactor is FMN.

The protein resides in the cell membrane. It carries out the reaction (S)-dihydroorotate + a quinone = orotate + a quinol. It functions in the pathway pyrimidine metabolism; UMP biosynthesis via de novo pathway; orotate from (S)-dihydroorotate (quinone route): step 1/1. In terms of biological role, catalyzes the conversion of dihydroorotate to orotate with quinone as electron acceptor. This chain is Dihydroorotate dehydrogenase (quinone), found in Sodalis glossinidius (strain morsitans).